We begin with the raw amino-acid sequence, 273 residues long: Putative pyruvate, phosphate dikinase regulatory protein (273 aa).

153–160 contributes to the ADP binding site; that stretch reads GISRTSKT.

Belongs to the pyruvate, phosphate/water dikinase regulatory protein family. PDRP subfamily.

The enzyme catalyses N(tele)-phospho-L-histidyl/L-threonyl-[pyruvate, phosphate dikinase] + ADP = N(tele)-phospho-L-histidyl/O-phospho-L-threonyl-[pyruvate, phosphate dikinase] + AMP + H(+). It catalyses the reaction N(tele)-phospho-L-histidyl/O-phospho-L-threonyl-[pyruvate, phosphate dikinase] + phosphate + H(+) = N(tele)-phospho-L-histidyl/L-threonyl-[pyruvate, phosphate dikinase] + diphosphate. In terms of biological role, bifunctional serine/threonine kinase and phosphorylase involved in the regulation of the pyruvate, phosphate dikinase (PPDK) by catalyzing its phosphorylation/dephosphorylation. This chain is Putative pyruvate, phosphate dikinase regulatory protein, found in Rhizobium etli (strain ATCC 51251 / DSM 11541 / JCM 21823 / NBRC 15573 / CFN 42).